We begin with the raw amino-acid sequence, 202 residues long: MPPRPRFDRRAPERELPNINERISYSSLRVVDSDGTQLGVISREDALEVAKERELDLVLVSEKATPPVCRIMNYGKFKFEQEKKAKEAKKKSHQTEVKEVKMRYKIDQHDYQVRISQATRFLKAGDKVKCTVIFRGREIQHTALAETLLKRMAKDLEEKAEVQQSPKREGRNMIMFLTPRKTPLLKKESEITEPKKALRTID.

This sequence belongs to the IF-3 family. In terms of assembly, monomer.

The protein resides in the cytoplasm. IF-3 binds to the 30S ribosomal subunit and shifts the equilibrium between 70S ribosomes and their 50S and 30S subunits in favor of the free subunits, thus enhancing the availability of 30S subunits on which protein synthesis initiation begins. The chain is Translation initiation factor IF-3 from Prochlorococcus marinus (strain NATL2A).